The chain runs to 313 residues: Sideroflexin-4 (313 aa).

5 consecutive transmembrane segments (helical) span residues 87 to 107 (AALL…VKSL), 141 to 161 (LLLG…PRLL), 175 to 191 (FIPV…NVIA), 230 to 247 (VVLF…AYFF), and 269 to 289 (VLVM…IGRI).

Belongs to the sideroflexin family.

The protein localises to the mitochondrion inner membrane. Functionally, mitochondrial amino-acid transporter. Does not act as a serine transporter: not able to mediate transport of serine into mitochondria. This chain is Sideroflexin-4, found in Bos taurus (Bovine).